The following is a 136-amino-acid chain: Protein NrdI (136 aa).

The protein belongs to the NrdI family.

Its function is as follows. Probably involved in ribonucleotide reductase function. This Shigella boydii serotype 4 (strain Sb227) protein is Protein NrdI.